A 453-amino-acid chain; its full sequence is CAAX prenyl protease 1 (453 aa).

Over Met1–Asn12 the chain is Lumenal. A helical membrane pass occupies residues Ile13–Leu33. Residues Thr34–Lys89 are Cytoplasmic-facing. Residues Tyr90–Val110 form a helical membrane-spanning segment. Residues Arg111–Ser121 are Lumenal-facing. A helical membrane pass occupies residues Leu122–Tyr142. Over Ser143–Lys167 the chain is Cytoplasmic. Residues Ser168–Asp188 form a helical membrane-spanning segment. Topologically, residues Lys189–Tyr197 are lumenal. The helical transmembrane segment at Ile198 to Met218 threads the bilayer. At Pro219 to His306 the chain is on the cytoplasmic side. His297 serves as a coordination point for Zn(2+). Glu298 is an active-site residue. Zn(2+) is bound at residue His301. The helical transmembrane segment at Ile307–Ser327 threads the bilayer. Residues Ile328–Glu357 are Lumenal-facing. A helical transmembrane segment spans residues Phe358–Met378. Residues Gln379 to Asn453 are Cytoplasmic-facing. Position 390 (Glu390) interacts with Zn(2+). The active-site Proton donor is the Asp394.

It belongs to the peptidase M48A family. Zn(2+) is required as a cofactor.

It is found in the endoplasmic reticulum membrane. The enzyme catalyses Hydrolyzes the peptide bond -P2-(S-farnesyl or geranylgeranyl)C-P1'-P2'-P3'-COOH where P1' and P2' are amino acids with aliphatic side chains and P3' is any C-terminal residue.. Proteolytically removes the C-terminal three residues of farnesylated A-factor mating pheromone. Also acts to cleave the N-terminal extension of the pheromone. Does not act on Ras. In Saccharomyces cerevisiae (strain ATCC 204508 / S288c) (Baker's yeast), this protein is CAAX prenyl protease 1 (STE24).